A 271-amino-acid chain; its full sequence is Mannosyl-3-phosphoglycerate phosphatase (271 aa).

D13 (nucleophile) is an active-site residue. D13, D15, and D214 together coordinate Mg(2+).

It belongs to the HAD-like hydrolase superfamily. MPGP family. Mg(2+) is required as a cofactor.

The protein resides in the cytoplasm. It carries out the reaction 2-O-(alpha-D-mannosyl)-3-phosphoglycerate + H2O = (2R)-2-O-(alpha-D-mannosyl)-glycerate + phosphate. This is Mannosyl-3-phosphoglycerate phosphatase from Escherichia coli O81 (strain ED1a).